Consider the following 21-residue polypeptide: Putative sperm adenylate cyclase (21 aa).

The enzyme catalyses ATP = 3',5'-cyclic AMP + diphosphate. This is Putative sperm adenylate cyclase from Mus musculus (Mouse).